The following is a 447-amino-acid chain: Argininosuccinate synthase (447 aa).

Residues 20 to 28 and Ala46 contribute to the ATP site; that span reads AFSGGLDTS. Residue Tyr102 participates in L-citrulline binding. Residues Gly132 and Thr134 each coordinate ATP. Residues Thr134, Asn138, and Asp139 each coordinate L-aspartate. Asn138 is a binding site for L-citrulline. Asp139 provides a ligand contact to ATP. L-citrulline contacts are provided by Arg142 and Ser195. Residue Asp197 participates in ATP binding. Thr204, Glu206, and Glu283 together coordinate L-citrulline.

Belongs to the argininosuccinate synthase family. Type 2 subfamily. Homotetramer.

The protein resides in the cytoplasm. It carries out the reaction L-citrulline + L-aspartate + ATP = 2-(N(omega)-L-arginino)succinate + AMP + diphosphate + H(+). It participates in amino-acid biosynthesis; L-arginine biosynthesis; L-arginine from L-ornithine and carbamoyl phosphate: step 2/3. The polypeptide is Argininosuccinate synthase (Neisseria meningitidis serogroup C / serotype 2a (strain ATCC 700532 / DSM 15464 / FAM18)).